The sequence spans 336 residues: Glucan endo-1,3-beta-glucosidase A (336 aa).

The N-terminal stretch at 1 to 23 (MAFLSSLLASLLLVGLLIQITGA) is a signal peptide. The residue at position 24 (Q24) is a Pyrrolidone carboxylic acid. The active-site Proton donor is the E118. Residue E257 is the Nucleophile of the active site.

Belongs to the glycosyl hydrolase 17 family.

The protein resides in the secreted. The protein localises to the extracellular space. It carries out the reaction Hydrolysis of (1-&gt;3)-beta-D-glucosidic linkages in (1-&gt;3)-beta-D-glucans.. Functionally, implicated in the defense of plants against pathogens. This Solanum lycopersicum (Tomato) protein is Glucan endo-1,3-beta-glucosidase A.